A 406-amino-acid chain; its full sequence is Cysteine desulfurase (406 aa).

N6-(pyridoxal phosphate)lysine is present on K226. C364 functions as the Cysteine persulfide intermediate in the catalytic mechanism.

Belongs to the class-V pyridoxal-phosphate-dependent aminotransferase family. Csd subfamily. In terms of assembly, homodimer. Interacts with SufE and the SufBCD complex composed of SufB, SufC and SufD. The interaction with SufE is required to mediate the direct transfer of the sulfur atom from the S-sulfanylcysteine. It depends on pyridoxal 5'-phosphate as a cofactor.

The protein resides in the cytoplasm. It catalyses the reaction (sulfur carrier)-H + L-cysteine = (sulfur carrier)-SH + L-alanine. The catalysed reaction is L-selenocysteine + AH2 = hydrogenselenide + L-alanine + A + H(+). Its pathway is cofactor biosynthesis; iron-sulfur cluster biosynthesis. In terms of biological role, cysteine desulfurases mobilize the sulfur from L-cysteine to yield L-alanine, an essential step in sulfur metabolism for biosynthesis of a variety of sulfur-containing biomolecules. Component of the suf operon, which is activated and required under specific conditions such as oxidative stress and iron limitation. Acts as a potent selenocysteine lyase in vitro, that mobilizes selenium from L-selenocysteine. Selenocysteine lyase activity is however unsure in vivo. This Yersinia pestis bv. Antiqua (strain Angola) protein is Cysteine desulfurase.